We begin with the raw amino-acid sequence, 129 residues long: Phosphoribosyl-AMP cyclohydrolase (129 aa).

Residue Asp-85 participates in Mg(2+) binding. Cys-86 is a Zn(2+) binding site. 2 residues coordinate Mg(2+): Asp-87 and Asp-89. 2 residues coordinate Zn(2+): Cys-102 and Cys-109.

It belongs to the PRA-CH family. As to quaternary structure, homodimer. It depends on Mg(2+) as a cofactor. Zn(2+) is required as a cofactor.

Its subcellular location is the cytoplasm. The catalysed reaction is 1-(5-phospho-beta-D-ribosyl)-5'-AMP + H2O = 1-(5-phospho-beta-D-ribosyl)-5-[(5-phospho-beta-D-ribosylamino)methylideneamino]imidazole-4-carboxamide. It participates in amino-acid biosynthesis; L-histidine biosynthesis; L-histidine from 5-phospho-alpha-D-ribose 1-diphosphate: step 3/9. In terms of biological role, catalyzes the hydrolysis of the adenine ring of phosphoribosyl-AMP. The protein is Phosphoribosyl-AMP cyclohydrolase of Methanococcus maripaludis (strain C6 / ATCC BAA-1332).